Here is a 458-residue protein sequence, read N- to C-terminus: Protein adenylyltransferase FICD (458 aa).

Residues 1–23 (MMLIPMASVMAVTEPKWVSVWSR) are Cytoplasmic-facing. A helical; Signal-anchor for type II membrane protein membrane pass occupies residues 24–44 (FLWVTLLSMVLGSLLALLLPL). Topologically, residues 45–458 (GAVEEQCLAV…GFKETLPVKP (414 aa)) are lumenal. O-AMP-serine; by autocatalysis is present on Ser79. Thr80 bears the O-AMP-threonine; by autocatalysis mark. TPR repeat units follow at residues 106–139 (ARAA…DPDF) and 140–173 (VDAL…SPYH). Thr183 is subject to O-AMP-threonine; by autocatalysis. Positions 230–235 (TVAIEG) match the Inhibitory (S/T)XXXE(G/N) motif motif. ATP is bound at residue Glu234. Asn275 carries an N-linked (GlcNAc...) asparagine glycan. The Fido domain maps to 285-420 (VTISDVLEIH…VRPFIRFIAK (136 aa)). 316–319 (VGHH) is an ATP binding site. The active site involves His363. ATP is bound by residues 367 to 374 (DGNGRTSR), 399 to 400 (YY), and Asn407. Asn446 carries N-linked (GlcNAc...) asparagine glycosylation.

Belongs to the fic family. Homodimer. Interacts with HD. Requires Mg(2+) as cofactor. Mn(2+) serves as cofactor. In terms of processing, auto-AMPylated in vitro; it is unclear whether auto-AMPylation is relevant in vivo. N-glycosylated; predominantly glycosylated at Asn-275. As to expression, ubiquitous.

It is found in the endoplasmic reticulum membrane. The catalysed reaction is L-tyrosyl-[protein] + ATP = O-(5'-adenylyl)-L-tyrosyl-[protein] + diphosphate. It carries out the reaction 3-O-(5'-adenylyl)-L-threonyl-[protein] + H2O = L-threonyl-[protein] + AMP + H(+). It catalyses the reaction L-threonyl-[protein] + ATP = 3-O-(5'-adenylyl)-L-threonyl-[protein] + diphosphate. Its activity is regulated as follows. The side chain of Glu-234 determines which of the two opposing activities (AMPylase or de-AMPylase) will take place. In response to endoplasmic reticulum stress, mediates de-AMPylase activity. Adenylyltransferase activity is inhibited by the inhibitory helix present at the N-terminus: Glu-234 binds ATP and competes with ATP-binding at Arg-374, thereby preventing adenylyltransferase activity. In unstressed cells, disengagement of Glu-234 promotes adenylyltransferase activity. Activation dissociates ATP-binding from Glu-234, allowing ordered binding of the entire ATP moiety with the alpha-phosphate in an orientation that is productive for accepting an incoming target hydroxyl side chain. Its function is as follows. Protein that can both mediate the addition of adenosine 5'-monophosphate (AMP) to specific residues of target proteins (AMPylation), and the removal of the same modification from target proteins (de-AMPylation), depending on the context. The side chain of Glu-231 determines which of the two opposing activities (AMPylase or de-AMPylase) will take place. Acts as a key regulator of the ERN1/IRE1-mediated unfolded protein response (UPR) by mediating AMPylation or de-AMPylation of HSPA5/BiP. In unstressed cells, acts as an adenylyltransferase by mediating AMPylation of HSPA5/BiP at 'Thr-518', thereby inactivating it. In response to endoplasmic reticulum stress, acts as a phosphodiesterase by mediating removal of ATP (de-AMPylation) from HSPA5/BiP at 'Thr-518', leading to restore HSPA5/BiP activity. Although it is able to AMPylate RhoA, Rac and Cdc42 Rho GTPases in vitro, Rho GTPases do not constitute physiological substrates. This Homo sapiens (Human) protein is Protein adenylyltransferase FICD.